The chain runs to 108 residues: UPF0060 membrane protein CJA_3703 (108 aa).

The next 4 helical transmembrane spans lie at 6–26 (LLFVVTALAEIIGCFLPYLWL), 31–51 (SIWLLLPAALSLALFAWLLTL), 61–81 (AAYGGVYVAVALLWLYWVDGV), and 85–105 (AYDWAGAAVALLGMAIIAMGW).

It belongs to the UPF0060 family.

It is found in the cell inner membrane. This Cellvibrio japonicus (strain Ueda107) (Pseudomonas fluorescens subsp. cellulosa) protein is UPF0060 membrane protein CJA_3703.